The following is a 398-amino-acid chain: Glucose-1-phosphate adenylyltransferase (398 aa).

Residues tyrosine 100, glycine 165, 180–181 (EK), and serine 191 each bind alpha-D-glucose 1-phosphate.

Belongs to the bacterial/plant glucose-1-phosphate adenylyltransferase family. As to quaternary structure, homotetramer.

The catalysed reaction is alpha-D-glucose 1-phosphate + ATP + H(+) = ADP-alpha-D-glucose + diphosphate. It functions in the pathway glycan biosynthesis; glycogen biosynthesis. Its function is as follows. Involved in the biosynthesis of ADP-glucose, a building block required for the elongation reactions to produce glycogen. Catalyzes the reaction between ATP and alpha-D-glucose 1-phosphate (G1P) to produce pyrophosphate and ADP-Glc. This Desulfitobacterium hafniense (strain Y51) protein is Glucose-1-phosphate adenylyltransferase.